Consider the following 363-residue polypeptide: Cleavage and termination factor 1 (363 aa).

The RRM domain maps to 7–85; sequence NVVFVGNIPY…RKIRVEFPSN (79 aa). Residues 291-325 are disordered; the sequence is QPASATSSPPSVPQKIPSSNHKSQQANGSDQGNEG. Residues 306-322 show a composition bias toward polar residues; it reads IPSSNHKSQQANGSDQG.

As to quaternary structure, interacts with res2.

It localises to the nucleus. Its function is as follows. Component of the cleavage factor I (CF I) involved in pre-mRNA 3'-end processing. The chain is Cleavage and termination factor 1 (ctf1) from Schizosaccharomyces pombe (strain 972 / ATCC 24843) (Fission yeast).